The sequence spans 511 residues: Ribose import ATP-binding protein RbsA 3 (511 aa).

ABC transporter domains lie at 21 to 257 (LEMR…VGRD) and 256 to 511 (RDVE…TGNA). 53–60 (GENGAGKS) contributes to the ATP binding site.

This sequence belongs to the ABC transporter superfamily. Ribose importer (TC 3.A.1.2.1) family. As to quaternary structure, the complex is composed of an ATP-binding protein (RbsA), two transmembrane proteins (RbsC) and a solute-binding protein (RbsB).

The protein resides in the cell inner membrane. The enzyme catalyses D-ribose(out) + ATP + H2O = D-ribose(in) + ADP + phosphate + H(+). Its function is as follows. Part of the ABC transporter complex RbsABC involved in ribose import. Responsible for energy coupling to the transport system. This is Ribose import ATP-binding protein RbsA 3 from Rhizobium etli (strain ATCC 51251 / DSM 11541 / JCM 21823 / NBRC 15573 / CFN 42).